We begin with the raw amino-acid sequence, 504 residues long: Arabinose import ATP-binding protein AraG (504 aa).

ABC transporter domains lie at 8–243 (LSFR…MVGR) and 256–499 (YGEE…MPKV). 40-47 (GENGAGKS) is an ATP binding site.

This sequence belongs to the ABC transporter superfamily. Arabinose importer (TC 3.A.1.2.2) family. As to quaternary structure, the complex is composed of two ATP-binding proteins (AraG), two transmembrane proteins (AraH) and a solute-binding protein (AraF).

It localises to the cell inner membrane. It catalyses the reaction L-arabinose(out) + ATP + H2O = L-arabinose(in) + ADP + phosphate + H(+). In terms of biological role, part of the ABC transporter complex AraFGH involved in arabinose import. Responsible for energy coupling to the transport system. The sequence is that of Arabinose import ATP-binding protein AraG from Shigella dysenteriae serotype 1 (strain Sd197).